The following is a 160-amino-acid chain: 2-C-methyl-D-erythritol 2,4-cyclodiphosphate synthase (160 aa).

A divalent metal cation-binding residues include D11 and H13. 4-CDP-2-C-methyl-D-erythritol 2-phosphate is bound by residues 11–13 (DVH) and 37–38 (HS). H45 lines the a divalent metal cation pocket. Residues 59–61 (DIG), 64–68 (FPDTD), 135–138 (TTTE), F142, and R145 each bind 4-CDP-2-C-methyl-D-erythritol 2-phosphate.

This sequence belongs to the IspF family. In terms of assembly, homotrimer. A divalent metal cation serves as cofactor.

The catalysed reaction is 4-CDP-2-C-methyl-D-erythritol 2-phosphate = 2-C-methyl-D-erythritol 2,4-cyclic diphosphate + CMP. It participates in isoprenoid biosynthesis; isopentenyl diphosphate biosynthesis via DXP pathway; isopentenyl diphosphate from 1-deoxy-D-xylulose 5-phosphate: step 4/6. Its function is as follows. Involved in the biosynthesis of isopentenyl diphosphate (IPP) and dimethylallyl diphosphate (DMAPP), two major building blocks of isoprenoid compounds. Catalyzes the conversion of 4-diphosphocytidyl-2-C-methyl-D-erythritol 2-phosphate (CDP-ME2P) to 2-C-methyl-D-erythritol 2,4-cyclodiphosphate (ME-CPP) with a corresponding release of cytidine 5-monophosphate (CMP). This chain is 2-C-methyl-D-erythritol 2,4-cyclodiphosphate synthase, found in Alcanivorax borkumensis (strain ATCC 700651 / DSM 11573 / NCIMB 13689 / SK2).